Consider the following 664-residue polypeptide: Protein IQ-DOMAIN 28 (664 aa).

A disordered region spans residues 1 to 85; that stretch reads MGKTPGKWIK…DESKDNLESR (85 aa). Residues 51–64 are compositionally biased toward low complexity; the sequence is VDPPVVSSQPVPAS. Residues 76–85 are compositionally biased toward basic and acidic residues; sequence DESKDNLESR. IQ domains lie at 93-121, 122-140, and 144-170; these read LEQA…GIIR, LQAV…ATYS, and GIVK…QKKH. Residues 106-116 are calmodulin-binding; sequence AHQARRAFRTL. 3 disordered regions span residues 244–488, 502–573, and 637–664; these read EIPK…KEKD, DEKS…SGRK, and AKGS…DWKR. The Nuclear localization signal 1 motif lies at 251-258; the sequence is KKRNYQAV. Positions 305–315 are enriched in basic and acidic residues; that stretch reads DPLRNESDKAN. Residues 339–353 show a composition bias toward low complexity; it reads SPSLKRSSLSNGSKK. Residues 351 to 358 carry the Nuclear localization signal 2 motif; the sequence is SKKATLRS. Composition is skewed to basic and acidic residues over residues 358–367, 427–447, and 502–532; these read SAEKKKKDIP, TEKE…KVLE, and DEKS…KCAD. A compositionally biased stretch (polar residues) spans 536-547; the sequence is SSENGNVGSDNT. Residues 652-664 show a composition bias toward basic and acidic residues; the sequence is DITHKSTRTDWKR.

This sequence belongs to the IQD family. In terms of assembly, binds to multiple calmodulin (CaM) in the presence of Ca(2+) and CaM-like proteins.

It is found in the nucleus. It localises to the cytoplasm. The protein localises to the cytoskeleton. May be involved in cooperative interactions with calmodulins or calmodulin-like proteins. Recruits calmodulin proteins to microtubules, thus being a potential scaffold in cellular signaling and trafficking. May associate with nucleic acids and regulate gene expression at the transcriptional or post-transcriptional level. This Arabidopsis thaliana (Mouse-ear cress) protein is Protein IQ-DOMAIN 28.